Here is a 77-residue protein sequence, read N- to C-terminus: Acyl carrier protein (77 aa).

The Carrier domain occupies 1–76 (MSIEERVKKI…SAIDYVAKAN (76 aa)). S36 bears the O-(pantetheine 4'-phosphoryl)serine mark.

Belongs to the acyl carrier protein (ACP) family. 4'-phosphopantetheine is transferred from CoA to a specific serine of apo-ACP by AcpS. This modification is essential for activity because fatty acids are bound in thioester linkage to the sulfhydryl of the prosthetic group.

Its subcellular location is the cytoplasm. It participates in lipid metabolism; fatty acid biosynthesis. In terms of biological role, carrier of the growing fatty acid chain in fatty acid biosynthesis. The sequence is that of Acyl carrier protein from Haemophilus ducreyi (strain 35000HP / ATCC 700724).